The primary structure comprises 297 residues: D-alanine--D-alanine ligase (297 aa).

The 200-residue stretch at 95–294 (KMLWKAFGLP…FEQLVVKILE (200 aa)) folds into the ATP-grasp domain. Residue 125-180 (VAKLGLPLMVKPSLEGSSVGLTKVKAVEELKSAVEYALKFDNTILIEEWLAGDELT) coordinates ATP. Positions 248, 261, and 263 each coordinate Mg(2+).

Belongs to the D-alanine--D-alanine ligase family. Mg(2+) serves as cofactor. Mn(2+) is required as a cofactor.

The protein resides in the cytoplasm. The catalysed reaction is 2 D-alanine + ATP = D-alanyl-D-alanine + ADP + phosphate + H(+). Its pathway is cell wall biogenesis; peptidoglycan biosynthesis. Cell wall formation. In Haemophilus influenzae (strain PittEE), this protein is D-alanine--D-alanine ligase.